Here is a 113-residue protein sequence, read N- to C-terminus: Transmembrane protein 256 (113 aa).

Residues 1-29 form the signal peptide; the sequence is MAGVGAAFRRLGALSGAGALGLASYGAHG. Over 30–63 the chain is Extracellular; the sequence is AQFPDAYGKELFDKANKHHFLHSLALLGVPSCRK. Residue Lys43 is modified to N6-acetyllysine. A helical membrane pass occupies residues 64 to 84; sequence PVWAGLLLASGTTLFCTSFYY. The Cytoplasmic segment spans residues 85-92; the sequence is QALSGDTS. The chain crosses the membrane as a helical span at residues 93-113; sequence IQTLGPVGGSLLILGWLALAF.

Belongs to the TMEM256 family.

It is found in the membrane. In Mus musculus (Mouse), this protein is Transmembrane protein 256 (Tmem256).